The following is a 264-amino-acid chain: Thymidylate synthase (264 aa).

DUMP is bound at residue R21. H51 is a (6R)-5,10-methylene-5,6,7,8-tetrahydrofolate binding site. 126 to 127 (RR) contacts dUMP. C146 functions as the Nucleophile in the catalytic mechanism. DUMP is bound by residues 166 to 169 (RSCD), N177, and 207 to 209 (HLY). (6R)-5,10-methylene-5,6,7,8-tetrahydrofolate is bound at residue D169. A263 is a (6R)-5,10-methylene-5,6,7,8-tetrahydrofolate binding site.

The protein belongs to the thymidylate synthase family. Bacterial-type ThyA subfamily. In terms of assembly, homodimer.

Its subcellular location is the cytoplasm. It carries out the reaction dUMP + (6R)-5,10-methylene-5,6,7,8-tetrahydrofolate = 7,8-dihydrofolate + dTMP. The protein operates within pyrimidine metabolism; dTTP biosynthesis. Its function is as follows. Catalyzes the reductive methylation of 2'-deoxyuridine-5'-monophosphate (dUMP) to 2'-deoxythymidine-5'-monophosphate (dTMP) while utilizing 5,10-methylenetetrahydrofolate (mTHF) as the methyl donor and reductant in the reaction, yielding dihydrofolate (DHF) as a by-product. This enzymatic reaction provides an intracellular de novo source of dTMP, an essential precursor for DNA biosynthesis. The chain is Thymidylate synthase from Sodalis glossinidius (strain morsitans).